A 278-amino-acid polypeptide reads, in one-letter code: Secreted RxLR effector protein 151 (278 aa).

An N-terminal signal peptide occupies residues 1–18; the sequence is MRNRAVLFGLFFIGYSSC. The RxLR-dEER signature appears at 49 to 64; the sequence is RLLQVDGPKRILAEER.

Belongs to the RxLR effector family.

The protein resides in the secreted. It localises to the host endoplasmic reticulum membrane. Functionally, secreted effector that completely suppresses the host cell death induced by cell death-inducing proteins. This is Secreted RxLR effector protein 151 from Plasmopara viticola (Downy mildew of grapevine).